The primary structure comprises 315 residues: 1,2-dihydroxy-3,5-cyclohexadiene-1,4-dicarboxylate dehydrogenase (315 aa).

3 residues coordinate a divalent metal cation: His159, His203, and His255.

Belongs to the PdxA family.

It carries out the reaction (3S,4R)-3,4-dihydroxycyclohexa-1,5-diene-1,4-dicarboxylate + NAD(+) = 3,4-dihydroxybenzoate + CO2 + NADH. In terms of biological role, involved in the degradation of terephthalate (TPA) via the protocatechuate (PCA) 4,5-cleavage pathway. Catalyzes the dehydrogenation of 1,2-dihydroxy-3,5-cyclohexadiene-1,4-dicarboxylate (DCD) to yield protocatechuate (PCA). This Comamonas sp protein is 1,2-dihydroxy-3,5-cyclohexadiene-1,4-dicarboxylate dehydrogenase (tphBI).